A 218-amino-acid polypeptide reads, in one-letter code: UPF0598 protein C8orf82 homolog (218 aa).

This sequence belongs to the UPF0598 family.

The polypeptide is UPF0598 protein C8orf82 homolog (Bos taurus (Bovine)).